The sequence spans 96 residues: Co-chaperonin GroES (96 aa).

The protein belongs to the GroES chaperonin family. Heptamer of 7 subunits arranged in a ring. Interacts with the chaperonin GroEL.

It localises to the cytoplasm. Functionally, together with the chaperonin GroEL, plays an essential role in assisting protein folding. The GroEL-GroES system forms a nano-cage that allows encapsulation of the non-native substrate proteins and provides a physical environment optimized to promote and accelerate protein folding. GroES binds to the apical surface of the GroEL ring, thereby capping the opening of the GroEL channel. The chain is Co-chaperonin GroES from Nitrosococcus oceani (strain ATCC 19707 / BCRC 17464 / JCM 30415 / NCIMB 11848 / C-107).